Consider the following 660-residue polypeptide: Alpha-1,2-mannosyltransferase MNN21 (660 aa).

Residues M1–K17 lie on the Cytoplasmic side of the membrane. A helical transmembrane segment spans residues Y18 to W38. The Extracellular portion of the chain corresponds to S39–D660. The tract at residues P75–L125 is disordered. Residue N657 is glycosylated (N-linked (GlcNAc...) asparagine).

It belongs to the MNN1/MNT family.

Its subcellular location is the golgi apparatus membrane. It participates in protein modification; protein glycosylation. Alpha-1,2-mannosyltransferase required for cell wall integrity. Responsible for addition of the first alpha-1,2-linked mannose to form the branches on the mannan backbone of oligosaccharides. Addition of alpha-1,2-mannose is required for stabilization of the alpha-1,6-mannose backbone and hence regulates mannan fibril length; and is important for both immune recognition and virulence. The chain is Alpha-1,2-mannosyltransferase MNN21 (MNN21) from Candida albicans (strain SC5314 / ATCC MYA-2876) (Yeast).